Here is a 572-residue protein sequence, read N- to C-terminus: Neuronal acetylcholine receptor subunit alpha-9-I (572 aa).

An N-terminal signal peptide occupies residues 1-19 (MKTVVLLTWISCWIDVCTS). Over 20 to 232 (AQGRYAQKLL…YTLHLKRRSL (213 aa)) the chain is Extracellular. A glycan (N-linked (GlcNAc...) asparagine) is linked at Asn-51. Cys-149 and Cys-163 form a disulfide bridge. N-linked (GlcNAc...) asparagine glycosylation occurs at Asn-164. A disulfide bridge connects residues Cys-213 and Cys-214. Helical transmembrane passes span 233-253 (FYIFNLLLPCFLISFLAPLGF), 263-283 (VSLGVTVLLALTVFQLMVAES), and 297-317 (YIATMTMITASTSLTIFIMNI). At 318 to 550 (HFCGAEAKPV…WKKVAKVMDR (233 aa)) the chain is on the cytoplasmic side. Positions 405 to 458 (GHLQNHHSTHQNHLDNCRYANGGHRDDHYSNRSNQNHHSNRSQTSKGEGGEEKR) are disordered. Over residues 435–447 (NRSNQNHHSNRSQ) the composition is skewed to low complexity. A helical transmembrane segment spans residues 551 to 571 (FFMWIFFIMVFLMSILIIGKA).

It belongs to the ligand-gated ion channel (TC 1.A.9) family. Acetylcholine receptor (TC 1.A.9.1) subfamily. As to expression, expressed in the liver, olfactory mucosa, pituitary gland, hair cells of the saccule and spleen.

The protein localises to the postsynaptic cell membrane. It is found in the cell membrane. This is Neuronal acetylcholine receptor subunit alpha-9-I (nachra9) from Oncorhynchus mykiss (Rainbow trout).